A 75-amino-acid chain; its full sequence is Small ribosomal subunit protein bS18 (75 aa).

Belongs to the bacterial ribosomal protein bS18 family. As to quaternary structure, part of the 30S ribosomal subunit. Forms a tight heterodimer with protein bS6.

Binds as a heterodimer with protein bS6 to the central domain of the 16S rRNA, where it helps stabilize the platform of the 30S subunit. This is Small ribosomal subunit protein bS18 from Shewanella frigidimarina (strain NCIMB 400).